The sequence spans 190 residues: MDTKMTEREKMTKGLMYDPGDEELCKGRTEARQLIHRFNNSMDKLERKDITKQLFGSTGEKIYLEPTLRVDYGYNIHVGENFYANFGAIFLDICPITIGKNAMLAPNVQLYSATHPIDPTERNSGLEFGKPITIGDNAWIGGGAIILPGVTLGDNVVVGSGAVVTRSFGSNVVIAGNPAKVIKEIPVKSE.

It belongs to the transferase hexapeptide repeat family.

The polypeptide is Putative acetyltransferase DDB_G0275913 (Dictyostelium discoideum (Social amoeba)).